Consider the following 601-residue polypeptide: Glutamine--fructose-6-phosphate aminotransferase [isomerizing] (601 aa).

The active-site Nucleophile; for GATase activity is the Cys2. Positions 2–216 constitute a Glutamine amidotransferase type-2 domain; it reads CGIVGYIGTN…DKEIVIVTKD (215 aa). SIS domains lie at 282-421 and 453-591; these read IIDE…EIGD and IAGE…VDKP. Lys596 acts as the For Fru-6P isomerization activity in catalysis.

As to quaternary structure, homodimer.

The protein resides in the cytoplasm. The enzyme catalyses D-fructose 6-phosphate + L-glutamine = D-glucosamine 6-phosphate + L-glutamate. Functionally, catalyzes the first step in hexosamine metabolism, converting fructose-6P into glucosamine-6P using glutamine as a nitrogen source. The protein is Glutamine--fructose-6-phosphate aminotransferase [isomerizing] of Listeria monocytogenes serovar 1/2a (strain ATCC BAA-679 / EGD-e).